Reading from the N-terminus, the 179-residue chain is MATMLINHMLFLTSLLIVVFPVANAIPARDIDKLCKETTDVPFCLKYLGTDPRIPAARDLTDVLLIAITQSKMQVDDATTHIDRVRRKFNGPHGRRRIEVCKTNYGIASARFHTAWELGLQKSFWDVEKLARIGTNAVIDCENVWRRDGPIQTSPLTFYNMNVFKLSGIILLIFNKLVT.

Residues 1–25 form the signal peptide; sequence MATMLINHMLFLTSLLIVVFPVANA. 2 disulfide bridges follow: cysteine 35-cysteine 44 and cysteine 101-cysteine 141.

This sequence belongs to the PMEI family. As to expression, expressed in seeds, buds, and mature flowers.

Its subcellular location is the secreted. The protein resides in the extracellular space. The protein localises to the apoplast. Pectin methylesterase (PME) inhibitor that targets PME from seeds and modulates PME activity and pectin methylesterification during seed germination. This Arabidopsis thaliana (Mouse-ear cress) protein is Pectinesterase inhibitor 5.